The sequence spans 690 residues: MENDKMEIYESLIRWLSELNLSAPHGTVQELSDGAALAQALNQIAPEVFTDSWLSKIKSDVGANWRLKVSNLRKIIEGIYVYYQDELSLNLSEELRPDALKIAEKGDPHELGRLLQLILGCAVNCLEKQKYITQIMELEESLQRNIMAALQDIEYIWQGASPSRNSINTAATSLDVKTLQEDRDTLAQKCHETNKKMLGLIEEKAALQQEIVKLQAIVGRYENPNLIGDDGTSLGPIQLGSSRYNDLRKLVDSLKDELLQAETARDDLKMKSMIQEKEIGELQVKIDELHAATAEIAQLKDEIDILKEANEKLKICETQLQTYKKKLEDYNDLKKQIKLQEERSADYLKQNLEYEEEAKKYAGLKGQVELYKKKIQDLHGMLDEEMGKTVRAEFEYNQLQGQLAVVQREKETLLSERDTLREALDELKCGQAVGADGVGHGGPGGNTMSKELHSNDVCERIERLERENKALREGQGGQTALSQLLDDANQRNEKLREQLKSANQKILLLSQHHAEDGTTKSELEMQMKQTLELGEQRSSAQQQLDETTQHQLSNLHTKIANLEAALVVKDQELQAADVRYKKCVEKAKEVIKTLDAHAISEALLMDKVDSASGTGVDATLTTVGNGGTAARAPMGQQEEQLIATAFYRLGMVCHREAVDARLLSGPGQSFLARQRQPAARKPLNANYAKK.

One can recognise a Calponin-homology (CH) domain in the interval 6 to 122 (MEIYESLIRW…RLLQLILGCA (117 aa)). 2 coiled-coil regions span residues 134–515 (QIME…HHAE) and 546–577 (ETTQ…QAAD).

This sequence belongs to the hook family. Homodimer. Interacts with microtubules via its N-terminus.

The protein localises to the cytoplasm. It localises to the cytoskeleton. It is found in the endosome. In terms of biological role, involved in endocytic trafficking. Probably acts as a cytoskeletal linker protein that tethers endosome vesicles to the cytoskeleton. The sequence is that of Protein hook from Anopheles gambiae (African malaria mosquito).